A 697-amino-acid chain; its full sequence is Putative flagellar export/assembly protein LfhA (697 aa).

Transmembrane regions (helical) follow at residues 19–39, 40–60, 66–86, 116–136, 204–224, 242–262, and 280–302; these read VPLV…PALL, DILF…AVSA, FSLF…LNVA, GNFV…FIVV, AIAG…IGIF, IGDG…AAII, and LLAS…VVPG.

The protein belongs to the FHIPEP (flagella/HR/invasion proteins export pore) family.

The protein localises to the cell inner membrane. Part of the flagellar gene cluster Flag-2. However, the Flag-2 flagellar system could be inactive in strain 042 due to a frameshift in lfgC. In Escherichia coli O44:H18 (strain 042 / EAEC), this protein is Putative flagellar export/assembly protein LfhA.